Consider the following 146-residue polypeptide: Large ribosomal subunit protein uL15 (146 aa).

Residues 1-65 (MSDIQLNSLK…GQMPLQRRLP (65 aa)) are disordered. Residues 24–34 (RGIGSGLGKTA) show a composition bias toward gly residues.

Belongs to the universal ribosomal protein uL15 family. Part of the 50S ribosomal subunit.

Its function is as follows. Binds to the 23S rRNA. The protein is Large ribosomal subunit protein uL15 of Bordetella avium (strain 197N).